The primary structure comprises 164 residues: C-phycoerythrin alpha chain (164 aa).

Residues C82 and C139 each contribute to the (2R,3E)-phycoerythrobilin site.

The protein belongs to the phycobiliprotein family. Heterodimer of an alpha and a beta chain. Contains two covalently linked bilin chromophores.

Its subcellular location is the cellular thylakoid membrane. In terms of biological role, light-harvesting photosynthetic bile pigment-protein from the phycobiliprotein complex. The chain is C-phycoerythrin alpha chain (cpeA) from Microchaete diplosiphon (Fremyella diplosiphon).